A 65-amino-acid chain; its full sequence is Large ribosomal subunit protein bL35 (65 aa).

Belongs to the bacterial ribosomal protein bL35 family.

The sequence is that of Large ribosomal subunit protein bL35 from Clostridium kluyveri (strain NBRC 12016).